Here is a 312-residue protein sequence, read N- to C-terminus: Ribonuclease HIII (312 aa).

In terms of domain architecture, RNase H type-2 spans 95 to 311 (FNCIGSDEAG…REKAQKILKP (217 aa)). A divalent metal cation-binding residues include aspartate 101, glutamate 102, and aspartate 206.

It belongs to the RNase HII family. RnhC subfamily. Requires Mn(2+) as cofactor. Mg(2+) serves as cofactor.

The protein localises to the cytoplasm. It carries out the reaction Endonucleolytic cleavage to 5'-phosphomonoester.. Endonuclease that specifically degrades the RNA of RNA-DNA hybrids. The protein is Ribonuclease HIII of Staphylococcus aureus (strain MW2).